Reading from the N-terminus, the 100-residue chain is Large ribosomal subunit protein bL21 (100 aa).

It belongs to the bacterial ribosomal protein bL21 family. In terms of assembly, part of the 50S ribosomal subunit. Contacts protein L20.

Functionally, this protein binds to 23S rRNA in the presence of protein L20. The chain is Large ribosomal subunit protein bL21 from Corynebacterium urealyticum (strain ATCC 43042 / DSM 7109).